A 324-amino-acid chain; its full sequence is tRNA (cytidine(32)/guanosine(34)-2'-O)-methyltransferase (324 aa).

S-adenosyl-L-methionine contacts are provided by Gly-53, Trp-55, Asp-75, Asp-91, and Asp-116. The active-site Proton acceptor is Lys-156. The tract at residues Asp-221–Asp-240 is required for binding to WDR6.

It belongs to the class I-like SAM-binding methyltransferase superfamily. RNA methyltransferase RlmE family. TRM7 subfamily. Interacts with WDR6; the interaction is direct, and required for 2'-O-methylation of position 34 in substrate tRNAs.

Its subcellular location is the cytoplasm. The protein resides in the nucleus. It carries out the reaction cytidine(32)/guanosine(34) in tRNA + 2 S-adenosyl-L-methionine = 2'-O-methylcytidine(32)/2'-O-methylguanosine(34) in tRNA + 2 S-adenosyl-L-homocysteine + 2 H(+). In terms of biological role, methylates the 2'-O-ribose of nucleotides at positions 32 and 34 of the tRNA anticodon loop of substrate tRNAs. Requisite for faithful cytoplasmic translation. Requires THADA for methylation of the cytidine at position 32 of the anticodon loop of substrate tRNAs. Requires WDR6 for methylation of the nucleotide at position 34 of the anticodon loop of substrate tRNAs. Promotes translation efficiency of the UUU codon. Plays a role in neurogenesis. Required for expression of genes involved in neurogenesis and mitochondrial translation and energy generation. Requisite for RNA-mediated gene silencing. May modify position 32 in tRNA(Arg(ACG)), tRNA(Gln(CUG)), tRNA(Leu(UAA)), tRNA(Leu(UAG)), tRNA(Leu(AAG)), tRNA(Leu(CAG)), tRNA(Phe(GAA)), tRNA(Trp(CCA)) and tRNA(Val(AAC)), and position 34 in tRNA(Phe(GAA)), tRNA(Leu(CAA)), tRNA(Leu(UAA)), tRNA(Sec(UCA)), and tRNA(Trp(CCA)). The sequence is that of tRNA (cytidine(32)/guanosine(34)-2'-O)-methyltransferase from Mus musculus (Mouse).